A 133-amino-acid polypeptide reads, in one-letter code: Large ribosomal subunit protein uL14m (133 aa).

The protein belongs to the universal ribosomal protein uL14 family. In terms of assembly, probably part of the large ribosomal subunit.

The protein resides in the hydrogenosome. The sequence is that of Large ribosomal subunit protein uL14m (rpl14) from Nyctotherus ovalis.